Reading from the N-terminus, the 171-residue chain is S-ribosylhomocysteine lyase (171 aa).

Positions 54, 58, and 128 each coordinate Fe cation.

The protein belongs to the LuxS family. Homodimer. Fe cation serves as cofactor.

The catalysed reaction is S-(5-deoxy-D-ribos-5-yl)-L-homocysteine = (S)-4,5-dihydroxypentane-2,3-dione + L-homocysteine. In terms of biological role, involved in the synthesis of autoinducer 2 (AI-2) which is secreted by bacteria and is used to communicate both the cell density and the metabolic potential of the environment. The regulation of gene expression in response to changes in cell density is called quorum sensing. Catalyzes the transformation of S-ribosylhomocysteine (RHC) to homocysteine (HC) and 4,5-dihydroxy-2,3-pentadione (DPD). The polypeptide is S-ribosylhomocysteine lyase (Cronobacter sakazakii (strain ATCC BAA-894) (Enterobacter sakazakii)).